We begin with the raw amino-acid sequence, 55 residues long: Omega-ctenitoxin-Pr2a (55 aa).

Cystine bridges form between Cys2–Cys16, Cys9–Cys22, Cys15–Cys37, Cys24–Cys35, and Cys45–Cys52.

As to expression, expressed by the venom gland.

It is found in the secreted. Antagonist of L-type calcium channels (Cav1/CACNA1). In vivo, causes paralysis in posterior limbs, and gradual decrease in movement and aggression during 24 hours after intracerebroventricular injection in mice at dose levels of 3 ug per mouse. The sequence is that of Omega-ctenitoxin-Pr2a from Phoneutria reidyi (Brazilian Amazonian armed spider).